Consider the following 100-residue polypeptide: Large ribosomal subunit protein bL21 (100 aa).

It belongs to the bacterial ribosomal protein bL21 family. Part of the 50S ribosomal subunit. Contacts protein L20.

This protein binds to 23S rRNA in the presence of protein L20. The chain is Large ribosomal subunit protein bL21 from Wolbachia pipientis subsp. Culex pipiens (strain wPip).